The following is a 357-amino-acid chain: Alanine racemase (357 aa).

Residue lysine 34 is the Proton acceptor; specific for D-alanine of the active site. N6-(pyridoxal phosphate)lysine is present on lysine 34. Substrate is bound at residue arginine 129. Tyrosine 254 serves as the catalytic Proton acceptor; specific for L-alanine. Methionine 302 contacts substrate.

This sequence belongs to the alanine racemase family. The cofactor is pyridoxal 5'-phosphate.

It catalyses the reaction L-alanine = D-alanine. The protein operates within amino-acid biosynthesis; D-alanine biosynthesis; D-alanine from L-alanine: step 1/1. In terms of biological role, catalyzes the interconversion of L-alanine and D-alanine. Likely plays an important role in supplying D-alanine, which is an indispensable constituent in the biosynthesis of bacterial cell-wall peptidoglycan. This chain is Alanine racemase, found in Aeromonas hydrophila subsp. hydrophila (strain ATCC 7966 / DSM 30187 / BCRC 13018 / CCUG 14551 / JCM 1027 / KCTC 2358 / NCIMB 9240 / NCTC 8049).